Consider the following 311-residue polypeptide: Olfactory receptor 10J4 (311 aa).

Over 1–29 (MPRPNFMAVTEFTFEGFSIFEWHHRLILF) the chain is Extracellular. A helical membrane pass occupies residues 30–50 (VIFLVLYVLTLASNAIILIVI). At 51–57 (RLNHQLH) the chain is on the cytoplasmic side. A helical membrane pass occupies residues 58–78 (TPMYFFLSVLSISETYYTVAI). The Extracellular segment spans residues 79–98 (NPQMLSGLLSPQQTISIPGC). Residues C98 and C180 are joined by a disulfide bond. The chain crosses the membrane as a helical span at residues 99–119 (AAQLFFYLTFGVNKCFLLTAM). The Cytoplasmic segment spans residues 120–149 (GYDHYVAICNPLQYSVIMGKKACIQLVSGS). A helical transmembrane segment spans residues 150 to 170 (WNIGLSTAIIQVSSVFSLPFC). Residues 171–202 (DANLISHFFCDIRPIMKLACADTTIKEFITLL) lie on the Extracellular side of the membrane. The helical transmembrane segment at 203–223 (ISLCVLVLPMVLIFISYVLIV) threads the bilayer. Residues 224–237 (TTILKIASAEGRRK) are Cytoplasmic-facing. The chain crosses the membrane as a helical span at residues 238–254 (AFATCASHLTVVIVHYG). Residues 255-272 (RTSFIYLKPKSQNSLQDR) are Extracellular-facing. Residues 273 to 292 (LISVTYTVITPLLNPVVYSL) form a helical membrane-spanning segment. At 293 to 311 (RNKEVKDALLRALGRKPLS) the chain is on the cytoplasmic side.

It belongs to the G-protein coupled receptor 1 family.

The protein resides in the cell membrane. Functionally, odorant receptor. This is Olfactory receptor 10J4 (OR10J4) from Homo sapiens (Human).